The chain runs to 182 residues: Transcription antitermination protein NusB (182 aa).

Residues 159-182 (TPVENSEAEAAGYPVEESIEEDSQ) are disordered.

Belongs to the NusB family.

Its function is as follows. Involved in transcription antitermination. Required for transcription of ribosomal RNA (rRNA) genes. Binds specifically to the boxA antiterminator sequence of the ribosomal RNA (rrn) operons. The chain is Transcription antitermination protein NusB from Corynebacterium diphtheriae (strain ATCC 700971 / NCTC 13129 / Biotype gravis).